Consider the following 376-residue polypeptide: Putative glutamate--cysteine ligase 2 (376 aa).

This sequence belongs to the glutamate--cysteine ligase type 2 family. YbdK subfamily.

It carries out the reaction L-cysteine + L-glutamate + ATP = gamma-L-glutamyl-L-cysteine + ADP + phosphate + H(+). Its function is as follows. ATP-dependent carboxylate-amine ligase which exhibits weak glutamate--cysteine ligase activity. This chain is Putative glutamate--cysteine ligase 2, found in Mycobacterium bovis (strain ATCC BAA-935 / AF2122/97).